Here is a 421-residue protein sequence, read N- to C-terminus: Cytochrome c biogenesis protein Ccs1 (421 aa).

The next 3 membrane-spanning stretches (helical) occupy residues 12 to 32, 71 to 91, and 157 to 177; these read LRFA…GTVI, TWWF…CTLL, and IAPI…IIGS.

This sequence belongs to the Ccs1/CcsB family. In terms of assembly, may interact with CcsA.

The protein localises to the plastid. Its subcellular location is the chloroplast thylakoid membrane. Functionally, required during biogenesis of c-type cytochromes (cytochrome c6 and cytochrome f) at the step of heme attachment. In Thalassiosira pseudonana (Marine diatom), this protein is Cytochrome c biogenesis protein Ccs1.